The following is a 228-amino-acid chain: Large ribosomal subunit protein uL16 (228 aa).

It belongs to the universal ribosomal protein uL16 family. Component of the small ribosomal subunit. Mature ribosomes consist of a small (40S) and a large (60S) subunit. The 40S subunit contains about 33 different proteins and 1 molecule of RNA (18S). The 60S subunit contains about 49 different proteins and 3 molecules of RNA (25S, 5.8S and 5S).

This chain is Large ribosomal subunit protein uL16 (RPL10), found in Pinus taeda (Loblolly pine).